Here is a 26-residue protein sequence, read N- to C-terminus: Hemocyanin subunit B (26 aa).

Belongs to the tyrosinase family. Hemocyanin subfamily. In terms of tissue distribution, hemolymph.

The protein resides in the secreted. It localises to the extracellular space. Hemocyanins are copper-containing oxygen carriers occurring freely dissolved in the hemolymph of many mollusks and arthropods. This chain is Hemocyanin subunit B, found in Carcinus maenas (Common shore crab).